The primary structure comprises 127 residues: Putative lipoprotein LprJ (127 aa).

The N-terminal stretch at 1–34 (MTAHTHDGTRTWRTGRQATTLLALLAGVFGGAAS) is a signal peptide. Cys-35 carries N-palmitoyl cysteine lipidation. The S-diacylglycerol cysteine moiety is linked to residue Cys-35. Residues 35-99 (CAAPIQADMM…MAEINGMSRD (65 aa)) are Extracellular-facing. Residues 100-120 (MASTFTIVAIGTYCPAVIAPL) form a helical membrane-spanning segment. Residues 121–127 (MPNRLQA) are Cytoplasmic-facing.

May interact with sensor protein KdpD. Modified by Lgt on Cys-35 with an S-linked diacylglycerol, signal peptide is removed by LspA, modified by Lnt with amide-linked fatty acid.

Its subcellular location is the cell membrane. Overexpression induces expression of sensor protein kdpD gene at low K(+) concentrations (0 and 250 uM, tested in M.smegatis). This Mycobacterium tuberculosis (strain ATCC 25618 / H37Rv) protein is Putative lipoprotein LprJ (lprJ).